The sequence spans 405 residues: L-carnitine CoA-transferase (405 aa).

2 residues coordinate CoA: Lys97 and Arg104. Asp169 serves as the catalytic Nucleophile.

Belongs to the CoA-transferase III family. CaiB subfamily. As to quaternary structure, homodimer.

It localises to the cytoplasm. It carries out the reaction crotonobetainyl-CoA + (R)-carnitine = crotonobetaine + (R)-carnitinyl-CoA. It catalyses the reaction 4-(trimethylamino)butanoyl-CoA + (R)-carnitine = (R)-carnitinyl-CoA + 4-(trimethylamino)butanoate. Its pathway is amine and polyamine metabolism; carnitine metabolism. In terms of biological role, catalyzes the reversible transfer of the CoA moiety from gamma-butyrobetainyl-CoA to L-carnitine to generate L-carnitinyl-CoA and gamma-butyrobetaine. Is also able to catalyze the reversible transfer of the CoA moiety from gamma-butyrobetainyl-CoA or L-carnitinyl-CoA to crotonobetaine to generate crotonobetainyl-CoA. The protein is L-carnitine CoA-transferase of Salmonella enteritidis PT4 (strain P125109).